Reading from the N-terminus, the 202-residue chain is Glycoprotein U22 (202 aa).

Residues 1-20 (MVPQGCSLVWVSALYVSVIA) form the signal peptide. N-linked (GlcNAc...) asparagine; by host glycans are attached at residues Asn-54, Asn-107, Asn-112, and Asn-125. Residues 172 to 192 (FVYYCISVYLFAVVVLCSCWF) traverse the membrane as a helical segment.

It is found in the membrane. This Homo sapiens (Human) protein is Glycoprotein U22 (U22).